A 49-amino-acid chain; its full sequence is MRVNITLEHKESGERLYLTSKNKRNTPDRLQLKKYSPKLRKHVIFTEVK.

This sequence belongs to the bacterial ribosomal protein bL33 family.

This chain is Large ribosomal subunit protein bL33, found in Streptococcus suis (strain 98HAH33).